The chain runs to 511 residues: Coatomer subunit delta (511 aa).

Positions 168–177 are enriched in basic and acidic residues; the sequence is QARRDAERQG. The segment at 168-188 is disordered; that stretch reads QARRDAERQGKKAPGFGGFGS. Phosphoserine is present on S223. K233 and K241 each carry N6-acetyllysine. Phosphoserine is present on S244. An MHD domain is found at 271–511; sequence MESVHMKIEE…TFLVDKYEIL (241 aa). N6-acetyllysine occurs at positions 309 and 351. Phosphoserine is present on S493.

Belongs to the adaptor complexes medium subunit family. Delta-COP subfamily. In terms of assembly, oligomeric complex that consists of at least the alpha, beta, beta', gamma, delta, epsilon and zeta subunits.

It localises to the cytoplasm. The protein resides in the golgi apparatus membrane. It is found in the cytoplasmic vesicle. Its subcellular location is the COPI-coated vesicle membrane. In terms of biological role, the coatomer is a cytosolic protein complex that binds to dilysine motifs and reversibly associates with Golgi non-clathrin-coated vesicles, which further mediate biosynthetic protein transport from the ER, via the Golgi up to the trans Golgi network. Coatomer complex is required for budding from Golgi membranes, and is essential for the retrograde Golgi-to-ER transport of dilysine-tagged proteins. In mammals, the coatomer can only be recruited by membranes associated to ADP-ribosylation factors (ARFs), which are small GTP-binding proteins; the complex also influences the Golgi structural integrity, as well as the processing, activity, and endocytic recycling of LDL receptors. The protein is Coatomer subunit delta (Arcn1) of Rattus norvegicus (Rat).